Consider the following 381-residue polypeptide: Probable peptidoglycan glycosyltransferase FtsW (381 aa).

Over 1–15 (MNNKKKIVKIFFYDK) the chain is Cytoplasmic. Residues 16–36 (ILFFLLISLSIIGIIIVSSAS) traverse the membrane as a helical segment. The Periplasmic portion of the chain corresponds to 37–53 (ISFGIRLHNDYFYFAKR). Residues 54-74 (NLLYFFLSFFLFFQIIRIPIN) form a helical membrane-spanning segment. The Cytoplasmic portion of the chain corresponds to 75–81 (QLEKYNK). Residues 82-102 (IALLINLFLLIIVFIIGNSIN) traverse the membrane as a helical segment. Residues 103-109 (GAIRWIK) are Periplasmic-facing. Residues 110–130 (IGFFSIQPSECSKLILFFYIS) traverse the membrane as a helical segment. The Cytoplasmic portion of the chain corresponds to 131–143 (DYIVKKNKELKNK). A helical transmembrane segment spans residues 144-164 (LWGFLKPIIIMLIFVILLLMQ). Topologically, residues 165-166 (PD) are periplasmic. 2 consecutive transmembrane segments (helical) span residues 167 to 187 (LGNSLILFLTTLLLFFLAGIN) and 188 to 208 (LWKCCFMFLFGLLTIFILIIF). The Periplasmic segment spans residues 209–278 (KPYRIRRILS…FSILGEELGY (70 aa)). Residues 279–299 (IGSIIILIMLFFVIFRIFLIG) traverse the membrane as a helical segment. At 300–317 (KNSFIQKKFFSGYFSFSV) the chain is on the cytoplasmic side. The helical transmembrane segment at 318–338 (GIWISLQTIMNVGGVIGILPI) threads the bilayer. At 339-343 (KGLTL) the chain is on the periplasmic side. The helical transmembrane segment at 344–364 (PFISYGGSSLITIFSAIAIVI) threads the bilayer. Residues 365–381 (RSDFELRINKYQAYLKQ) lie on the Cytoplasmic side of the membrane.

It belongs to the SEDS family. FtsW subfamily.

The protein localises to the cell inner membrane. It catalyses the reaction [GlcNAc-(1-&gt;4)-Mur2Ac(oyl-L-Ala-gamma-D-Glu-L-Lys-D-Ala-D-Ala)](n)-di-trans,octa-cis-undecaprenyl diphosphate + beta-D-GlcNAc-(1-&gt;4)-Mur2Ac(oyl-L-Ala-gamma-D-Glu-L-Lys-D-Ala-D-Ala)-di-trans,octa-cis-undecaprenyl diphosphate = [GlcNAc-(1-&gt;4)-Mur2Ac(oyl-L-Ala-gamma-D-Glu-L-Lys-D-Ala-D-Ala)](n+1)-di-trans,octa-cis-undecaprenyl diphosphate + di-trans,octa-cis-undecaprenyl diphosphate + H(+). Its pathway is cell wall biogenesis; peptidoglycan biosynthesis. In terms of biological role, peptidoglycan polymerase that is essential for cell division. The protein is Probable peptidoglycan glycosyltransferase FtsW of Wigglesworthia glossinidia brevipalpis.